A 441-amino-acid polypeptide reads, in one-letter code: Transcriptional regulatory protein ZraR (441 aa).

In terms of domain architecture, Response regulatory spans 7 to 121; that stretch reads DILVVDDDVS…RLQETLEKAL (115 aa). Residue aspartate 56 is modified to 4-aspartylphosphate. The 230-residue stretch at 141–370 folds into the Sigma-54 factor interaction domain; sequence MIGSSPAMQH…LENAIERAVV (230 aa). 4 residues coordinate ATP: glycine 172, threonine 173, arginine 329, and arginine 359. The H-T-H motif DNA-binding region spans 421–440; sequence KTEAARQLGITRKTLLAKLS.

As to quaternary structure, forms homohexamers in the crystal structure. However, the dimerization interface between DNA-binding domains observed in the crystal structure suggests that dodecamers, rather than hexamers, might be the functionally important oligomer. Post-translationally, phosphorylated by ZraS.

The protein resides in the cytoplasm. Activity of the ZraS/ZraR two-component system is repressed by the zinc-bound form of ZraP, which probably interacts with the periplasmic region of ZraS. Part of the Zra signaling pathway, an envelope stress response (ESR) system composed of the periplasmic accessory protein ZraP, the histidine kinase ZraS and the transcriptional regulator ZraR. The ZraPSR system contributes to antibiotic resistance and is important for membrane integrity in the presence of membrane-targeting biocides. ZraR is a member of the two-component regulatory system ZraS/ZraR. When activated by ZraS, acts in conjunction with sigma-54 to regulate the expression of zraP in the presence of high Zn(2+) or Pb(2+) concentrations. Also positively autoregulates the expression of the zraSR operon. The chain is Transcriptional regulatory protein ZraR from Salmonella typhimurium (strain LT2 / SGSC1412 / ATCC 700720).